Reading from the N-terminus, the 299-residue chain is Bifunctional phosphoglucose/phosphomannose isomerase (299 aa).

Residues 27-177 (DEVEITPSSR…IHKLMEDFQK (151 aa)) enclose the SIS domain. Positions 44, 45, 84, 86, 89, and 132 each coordinate D-fructose 6-phosphate. Residue Glu200 is the Proton acceptor of the active site. Residues His216 and Lys295 each coordinate D-fructose 6-phosphate. The active-site Proton donor is the His216. Lys295 (proton acceptor) is an active-site residue.

It belongs to the PGI/PMI family. Homodimer.

It carries out the reaction alpha-D-glucose 6-phosphate = beta-D-fructose 6-phosphate. The catalysed reaction is D-mannose 6-phosphate = D-fructose 6-phosphate. Its activity is regulated as follows. Presence or absence of metal ions or EDTA does not significantly affect the phosphoglucose isomerase activity. In terms of biological role, dual specificity isomerase that catalyzes the isomerization of both glucose-6-phosphate and mannose-6-phosphate to fructose-6-phosphate with nearly similar catalytic efficiency. Also catalyzes the epimerization of mannose 6-phosphate to glucose 6-phosphate but the rate of epimerization reaction is 20-fold lower than that of isomerization reaction. This is Bifunctional phosphoglucose/phosphomannose isomerase from Pyrobaculum calidifontis (strain DSM 21063 / JCM 11548 / VA1).